Consider the following 360-residue polypeptide: Zinc metalloproteinase nas-5 (360 aa).

Residues 1-21 (MDIKQLLLSIILTVSVVNGRG) form the signal peptide. Positions 61 to 269 (NALLSNSPLR…KKVCAIYHCS (209 aa)) constitute a Peptidase M12A domain. Asparagine 108 carries N-linked (GlcNAc...) asparagine glycosylation. 2 disulfide bridges follow: cysteine 111–cysteine 268 and cysteine 134–cysteine 157. Position 165 (histidine 165) interacts with Zn(2+). Glutamate 166 is a catalytic residue. Residues histidine 169 and histidine 175 each coordinate Zn(2+). The PLAC domain maps to 299–336 (QGDSCTDRLGICPMLKSREMLNCKVMATFCCSSCSAPT).

Requires Zn(2+) as cofactor.

It localises to the secreted. Metalloprotease. In Caenorhabditis elegans, this protein is Zinc metalloproteinase nas-5 (nas-5).